A 354-amino-acid polypeptide reads, in one-letter code: Guanine nucleotide-binding protein G(o) subunit alpha (354 aa).

Gly-2 is lipidated: N-myristoyl glycine. Cys-3 carries the S-palmitoyl cysteine lipid modification. The G-alpha domain occupies 32 to 354 (KDIKLLLLGA…ANNLRGCGLY (323 aa)). The interval 35–48 (KLLLLGAGESGKST) is G1 motif. GTP-binding positions include 40–47 (GAGESGKS), 176–182 (LRTRVKT), 201–205 (DVGGQ), 270–273 (NKKD), and Ala-326. Mg(2+)-binding residues include Ser-47 and Thr-182. The segment at 174-182 (DILRTRVKT) is G2 motif. A G3 motif region spans residues 197 to 206 (FKLFDVGGQR). A G4 motif region spans residues 266–273 (ILFLNKKD). The tract at residues 324–329 (TCATDT) is G5 motif.

Belongs to the G-alpha family. G(i/o/t/z) subfamily. G proteins are composed of 3 units; alpha, beta and gamma. The alpha chain contains the guanine nucleotide binding site. Interacts (in GDP-bound form) with gpr-1; gpr-1 forms a complex with gpr-2 and lin-5. Interacts (in GDP-bound form) with gpb-1. Interacts (in GDP-bound form) with gbas-1 (via GBA motif); the interaction leads to activation of goa-1. In terms of tissue distribution, expressed in the ASER neuron and the intestine.

Functionally, guanine nucleotide-binding proteins (G proteins) are involved as modulators or transducers in various transmembrane signaling systems. In the 1-cell embryo, probably together with gpa-16, controls nuclear rotation and spindle elongation during mitosis. During the first embryonic cell divisions, plays a role in gpr-1/2 cortical localization and in the proper orientation of EMS blastomere mitotic spindle. Polarity determinants (par genes) may regulate lin-5/gpr-1/gpr-2/goa-1 locally to create the asymmetric forces that drive spindle movement. Involved in chemosensory responses to attractive and repellent odors detected by AWC and AWB sensory neurons, respectively. In ASER neurons, acts downstream of glr-3 to regulate cold avoidance behavior via calcium signaling, and it may also play a role in sensing cold in the intestine. Negatively regulates axon regeneration after injury downstream of the inhibitory compound arachidonoyl ethanolamide (AEA) by antagonizing the activation of the JNK pathway (mlk-1/mek-1/kgb-1). In neurons, may negatively regulate diacylglycerol (DAG) production mediated by egl-30 signaling cascade and thereby negatively regulates acetylcholine release. Couples to the muscarinic acetylcholine receptor gar-2 to negatively regulate cholinergic receptor activity in the presence of high levels of acetylcholine in ventral cord motor neurons. Plays a role in the navigational capacity of sperm and the targeting of sperm derived from males to the fertilization site in the uterus of hermaphrodites. Involved in egg-laying and in regulating dopamine-mediated locomotion. Most likely couples to the dopamine receptors dop-2 and dop-3 to positively regulate the dopamine-mediated suppression of crh-1/CREB1 transcription factor activation in cholinergic SIA neurons in the presence of food. The polypeptide is Guanine nucleotide-binding protein G(o) subunit alpha (Caenorhabditis elegans).